A 605-amino-acid polypeptide reads, in one-letter code: Probable potassium transport system protein Kup 3 (605 aa).

A run of 12 helical transmembrane segments spans residues 16 to 36, 49 to 69, 97 to 117, 138 to 158, 170 to 190, 212 to 232, 247 to 267, 287 to 307, 339 to 359, 368 to 388, 397 to 417, and 418 to 438; these read ALGL…TVIF, ILSL…AWLA, VAFA…DAVI, GLST…LFSV, FGPI…VSAF, GLAG…GEAL, AWHF…VFAI, LYIP…QAII, IYLG…MLVF, AYGM…IIVF, ALVA…TFSK, and LPHG…TIII.

It belongs to the HAK/KUP transporter (TC 2.A.72) family.

It localises to the cell inner membrane. It catalyses the reaction K(+)(in) + H(+)(in) = K(+)(out) + H(+)(out). Functionally, transport of potassium into the cell. Likely operates as a K(+):H(+) symporter. This Geobacter sulfurreducens (strain ATCC 51573 / DSM 12127 / PCA) protein is Probable potassium transport system protein Kup 3.